The sequence spans 485 residues: Inosine-5'-monophosphate dehydrogenase (485 aa).

CBS domains lie at 97-154 (IIRD…VSDV) and 155-211 (MVRD…PDAS). Residues D246 and 295 to 297 (GIG) each bind NAD(+). K(+)-binding residues include G297 and G299. S300 contributes to the IMP binding site. K(+) is bound at residue C302. Residue C302 is the Thioimidate intermediate of the active site. Residues 335–337 (DGG), 358–359 (GS), and 382–386 (YRGMG) each bind IMP. R398 serves as the catalytic Proton acceptor. E409 is a binding site for IMP. 3 residues coordinate K(+): E463, S464, and H465.

The protein belongs to the IMPDH/GMPR family. As to quaternary structure, homotetramer. The cofactor is K(+).

It carries out the reaction IMP + NAD(+) + H2O = XMP + NADH + H(+). The protein operates within purine metabolism; XMP biosynthesis via de novo pathway; XMP from IMP: step 1/1. With respect to regulation, mycophenolic acid (MPA) is a non-competitive inhibitor that prevents formation of the closed enzyme conformation by binding to the same site as the amobile flap. In contrast, mizoribine monophosphate (MZP) is a competitive inhibitor that induces the closed conformation. MPA is a potent inhibitor of mammalian IMPDHs but a poor inhibitor of the bacterial enzymes. MZP is a more potent inhibitor of bacterial IMPDH. In terms of biological role, catalyzes the conversion of inosine 5'-phosphate (IMP) to xanthosine 5'-phosphate (XMP), the first committed and rate-limiting step in the de novo synthesis of guanine nucleotides, and therefore plays an important role in the regulation of cell growth. The sequence is that of Inosine-5'-monophosphate dehydrogenase from Thermoplasma acidophilum (strain ATCC 25905 / DSM 1728 / JCM 9062 / NBRC 15155 / AMRC-C165).